We begin with the raw amino-acid sequence, 313 residues long: Protein HEXIM2 (313 aa).

Polar residues predominate over residues 1–13 (MATVNHTNCNTAS). A disordered region spans residues 1-78 (MATVNHTNCN…RGSRTQSPGG (78 aa)). Phosphoserine occurs at positions 28, 52, 75, and 80. Residues 64–77 (SSCNIRGSRTQSPG) are compositionally biased toward polar residues. 3 disordered regions span residues 111 to 139 (EKQQRDERQSQRASRVREEMFAKGQPLAP), 155 to 194 (PNLDVLHGPSHSGSGGENEAGDSDGQGRAHGEFQQRDFSE), and 267 to 313 (QENE…AGDR). Over residues 112–131 (KQQRDERQSQRASRVREEMF) the composition is skewed to basic and acidic residues. The interval 139–142 (PYNT) is interaction with P-TEFb. A compositionally biased stretch (basic and acidic residues) spans 179 to 194 (GQGRAHGEFQQRDFSE). Residues 207-276 (RSKQELVRDY…QENEMWNREG (70 aa)) adopt a coiled-coil conformation. Positions 225 to 286 (QAEQETRRLR…GYCDQEKPAS (62 aa)) are interaction with CCNT1, HEXIM1 and HEXIM2.

This sequence belongs to the HEXIM family. In terms of assembly, homooligomer and heterooligomer with HEXIM1; probably dimeric. Core component of the 7SK RNP complex, at least composed of 7SK RNA, LARP7, MEPCE, HEXIM1 (or HEXIM2) and P-TEFb (composed of CDK9 and CCNT1/cyclin-T1). Interacts with CCNT2.

The protein resides in the nucleus. In terms of biological role, transcriptional regulator which functions as a general RNA polymerase II transcription inhibitor. Core component of the 7SK RNP complex: in cooperation with 7SK snRNA sequesters P-TEFb in a large inactive 7SK snRNP complex preventing RNA polymerase II phosphorylation and subsequent transcriptional elongation. The sequence is that of Protein HEXIM2 (Hexim2) from Mus musculus (Mouse).